The chain runs to 291 residues: Secreted effector protein PipB (291 aa).

2 consecutive Pentapeptide repeat domains span residues 154–193 (LNLR…NLVG) and 199–238 (ANLH…ILFG).

Its subcellular location is the secreted. The protein localises to the host membrane. Effector proteins function to alter host cell physiology and promote bacterial survival in host tissues. Does not appear to be required for the formation or the maintenance of either Salmonella-containing vacuole (SCV) or the Salmonella-induced filaments (Sifs). Not required for intracellular replication in phagocytic cells. The chain is Secreted effector protein PipB (pipB) from Salmonella typhimurium (strain LT2 / SGSC1412 / ATCC 700720).